The sequence spans 282 residues: Phosphatidylserine decarboxylase proenzyme (282 aa).

Catalysis depends on charge relay system; for autoendoproteolytic cleavage activity residues D88, H144, and S247. S247 acts as the Schiff-base intermediate with substrate; via pyruvic acid; for decarboxylase activity in catalysis. S247 carries the pyruvic acid (Ser); by autocatalysis modification.

The protein belongs to the phosphatidylserine decarboxylase family. PSD-B subfamily. Prokaryotic type I sub-subfamily. In terms of assembly, heterodimer of a large membrane-associated beta subunit and a small pyruvoyl-containing alpha subunit. Requires pyruvate as cofactor. In terms of processing, is synthesized initially as an inactive proenzyme. Formation of the active enzyme involves a self-maturation process in which the active site pyruvoyl group is generated from an internal serine residue via an autocatalytic post-translational modification. Two non-identical subunits are generated from the proenzyme in this reaction, and the pyruvate is formed at the N-terminus of the alpha chain, which is derived from the carboxyl end of the proenzyme. The autoendoproteolytic cleavage occurs by a canonical serine protease mechanism, in which the side chain hydroxyl group of the serine supplies its oxygen atom to form the C-terminus of the beta chain, while the remainder of the serine residue undergoes an oxidative deamination to produce ammonia and the pyruvoyl prosthetic group on the alpha chain. During this reaction, the Ser that is part of the protease active site of the proenzyme becomes the pyruvoyl prosthetic group, which constitutes an essential element of the active site of the mature decarboxylase.

It is found in the cell membrane. It carries out the reaction a 1,2-diacyl-sn-glycero-3-phospho-L-serine + H(+) = a 1,2-diacyl-sn-glycero-3-phosphoethanolamine + CO2. It participates in phospholipid metabolism; phosphatidylethanolamine biosynthesis; phosphatidylethanolamine from CDP-diacylglycerol: step 2/2. Its function is as follows. Catalyzes the formation of phosphatidylethanolamine (PtdEtn) from phosphatidylserine (PtdSer). The chain is Phosphatidylserine decarboxylase proenzyme from Xanthomonas oryzae pv. oryzae (strain KACC10331 / KXO85).